A 401-amino-acid chain; its full sequence is Tyrosine--tRNA ligase (401 aa).

A 'HIGH' region motif is present at residues 42–51 (PTAPDLHLGH). The short motif at 226–230 (KMSKS) is the 'KMSKS' region element. Lys229 serves as a coordination point for ATP. The 62-residue stretch at 336 to 397 (IALAQLLKQI…GKRRIAKLSI (62 aa)) folds into the S4 RNA-binding domain.

The protein belongs to the class-I aminoacyl-tRNA synthetase family. TyrS type 2 subfamily. Homodimer.

It localises to the cytoplasm. The enzyme catalyses tRNA(Tyr) + L-tyrosine + ATP = L-tyrosyl-tRNA(Tyr) + AMP + diphosphate + H(+). In terms of biological role, catalyzes the attachment of tyrosine to tRNA(Tyr) in a two-step reaction: tyrosine is first activated by ATP to form Tyr-AMP and then transferred to the acceptor end of tRNA(Tyr). The sequence is that of Tyrosine--tRNA ligase from Legionella pneumophila subsp. pneumophila (strain Philadelphia 1 / ATCC 33152 / DSM 7513).